The sequence spans 291 residues: uncharacterized protein (291 aa).

3 Solcar repeats span residues 15-93 (PGPV…IKKS), 104-190 (PRTV…IKQS), and 201-287 (LSTV…VMEI). Transmembrane regions (helical) follow at residues 21–41 (IIAG…AEFA), 70–90 (STVI…FDSI), 108–128 (LAGL…FESI), 169–189 (TVAR…SIKQ), 201–221 (LSTV…VYCT), and 259–280 (FWSG…VFTV).

Belongs to the mitochondrial carrier (TC 2.A.29) family.

The protein resides in the mitochondrion inner membrane. This is an uncharacterized protein from Schizosaccharomyces pombe (strain 972 / ATCC 24843) (Fission yeast).